A 248-amino-acid chain; its full sequence is Triosephosphate isomerase (248 aa).

Substrate is bound by residues asparagine 10 and lysine 12. The active-site Electrophile is the histidine 95. Glutamate 165 (proton acceptor) is an active-site residue.

Belongs to the triosephosphate isomerase family. Homodimer.

It carries out the reaction D-glyceraldehyde 3-phosphate = dihydroxyacetone phosphate. The protein operates within carbohydrate biosynthesis; gluconeogenesis. It participates in carbohydrate degradation; glycolysis; D-glyceraldehyde 3-phosphate from glycerone phosphate: step 1/1. The chain is Triosephosphate isomerase (TPI1) from Zygosaccharomyces bailii.